The sequence spans 839 residues: ATP-binding cassette sub-family F member 1 (839 aa).

A disordered region spans residues Met-1–Gln-258. Residue Ser-22 is modified to Phosphoserine. The span at Lys-29–Lys-39 shows a compositional bias: basic residues. Residues Val-47–Gln-64 show a composition bias toward basic and acidic residues. A compositionally biased stretch (basic residues) spans Gln-71–Lys-83. Ser-105, Ser-109, and Ser-140 each carry phosphoserine. Residues Ile-136–Glu-149 show a composition bias toward acidic residues. The segment covering Lys-150–Arg-162 has biased composition (basic and acidic residues). At Thr-195 the chain carries Phosphothreonine. Position 197 is a phosphoserine (Ser-197). Residues Thr-206–Ala-223 are compositionally biased toward basic and acidic residues. Position 227 is a phosphoserine (Ser-227). Residues Leu-247 to Lys-256 are compositionally biased toward basic residues. One can recognise an ABC transporter 1 domain in the interval Ile-298 to Leu-542. ATP is bound at residue Gly-330 to Thr-337. Residues Lys-553–Thr-574 show a composition bias toward basic and acidic residues. Residues Lys-553–Arg-600 form a disordered region. Ser-589 is subject to Phosphoserine. An ABC transporter 2 domain is found at Leu-619–Val-834. Gly-652–Ser-659 is an ATP binding site.

Interacts (via N-terminus) with EIF2S1; the interaction is independent of its phosphorylated status. Associates (via both ABC transporter domains) with the ribosomes. Post-translationally, phosphorylated at phosphoserine and phosphothreonine. Phosphorylation on Ser-109 and Ser-140 by CK2; inhibits association of EIF2 with ribosomes.

It localises to the cytoplasm. The protein localises to the nucleus. The protein resides in the nucleoplasm. It is found in the nucleus envelope. Required for efficient Cap- and IRES-mediated mRNA translation initiation. Not involved in the ribosome biogenesis. The protein is ATP-binding cassette sub-family F member 1 (Abcf1) of Rattus norvegicus (Rat).